A 591-amino-acid polypeptide reads, in one-letter code: MAANMYRVGDYVYFENSSSNPYLIRRIEELNKTASGNVEAKVVCFYRRRDISNTLIMLADKHAKETEEESETPVEADLTEKQKHQLKHRELFLSRQYESLPATHIRGKCSVALLNETESVLSYLDKEDTFFYSLVYDPSVKTLLADKGEIRVGPKYQADIPDMLPEDSDEREQSKLEVKVWDPNSPLTDRQIDQFLVVARAVGTFARALDCSSSVRQPSLHMSAAAASRDITLFHAMDTLYRHGYDLSSAISVLVPLGGPVLCRDEMEEWSASEACLFEEALEKYGKDFNDIRQDFLPWKSLTSIIEYYYMWKTTDRYVQQKRLKAAEAESKLKQVYIPTYKPNPNQISSSNGKAGTVNGAVGTQFQPQSALLGRACESCYATQSHQWYSWGPPNMQCRLCATCWLYWKKYGGLKMPTQSDEEKSPSPTAEDPRARSHMSRQALQGMPVRNTGSPKSAVKTRQAFFLRTTYFTKIARQVCKSTLRLRQAARRPFVAINYAAIRAEYADRHAELSGSPLKSRSTRKPLSCIIGYLEIHPAKKPNVIRSPPSLQTPATKRMLAAPNHTSLSILGKRNYSHHNGLDGPERWLSR.

The BAH domain maps to 1–147; sequence MAANMYRVGD…PSVKTLLADK (147 aa). In terms of domain architecture, ELM2 spans 148–258; the sequence is GEIRVGPKYQ…SAISVLVPLG (111 aa). The SANT domain maps to 265 to 317; it reads DEMEEWSASEACLFEEALEKYGKDFNDIRQDFLPWKSLTSIIEYYYMWKTTDR. A GATA-type; atypical zinc finger spans residues 377–404; it reads CESCYATQSHQWYSWGPPNMQCRLCATC. The tract at residues 417–456 is disordered; the sequence is PTQSDEEKSPSPTAEDPRARSHMSRQALQGMPVRNTGSPK. Positions 421–435 are enriched in basic and acidic residues; sequence DEEKSPSPTAEDPRA. Ser-425 and Ser-427 each carry phosphoserine. Residue Thr-452 is modified to Phosphothreonine. Residue Ser-516 is modified to Phosphoserine.

This sequence belongs to the metastasis-associated protein family. Component of the nucleosome remodeling and deacetylase (NuRD) repressor complex, composed of core proteins MTA1, MTA2, MTA3, RBBP4, RBBP7, HDAC1, HDAC2, MBD2, MBD3, and peripherally associated proteins CDK2AP1, CDK2AP2, GATAD2A, GATAD2B, CHD3, CHD4 and CHD5. The exact stoichiometry of the NuRD complex is unknown, and some subunits such as MBD2 and MBD3, GATAD2A and GATAD2B, and CHD3, CHD4 and CHD5 define mutually exclusive NuRD complexes. Interacts with BCL6. Interacts with NACC2. Interacts with PWWP2B. As to expression, expressed in heart, brain, spleen, lung, liver and kidney.

It is found in the nucleus. The protein resides in the cytoplasm. Its function is as follows. Acts as a component of the histone deacetylase NuRD complex which participates in the remodeling of chromatin. Plays a role in maintenance of the normal epithelial architecture through the repression of SNAI1 transcription in a histone deacetylase-dependent manner, and thus the regulation of E-cadherin levels. Contributes to transcriptional repression by BCL6. The polypeptide is Metastasis-associated protein MTA3 (Mta3) (Mus musculus (Mouse)).